The following is a 266-amino-acid chain: Energy-coupling factor transporter ATP-binding protein EcfA2 (266 aa).

The 236-residue stretch at 3–238 folds into the ABC transporter domain; that stretch reads IEVVNVSHIF…YDPRFFTSKM (236 aa). 43–48 is an ATP binding site; sequence GSGKST. The active-site Proton acceptor is Glu-164. Residues 220 to 266 form a required for heterodimer formation region; sequence GTRMEFLEKYDPRFFTSKMLVMRRLVLKGEDPFSMSDDELLERVCNS.

Belongs to the ABC transporter superfamily. Energy-coupling factor EcfA family. Forms a heterodimer with EcfA1. Forms a stable energy-coupling factor (ECF) transporter complex composed of 2 membrane-embedded substrate-binding proteins (S component, RibU, BioY), 2 ATP-binding proteins (A component) and 2 transmembrane proteins (T component) upon coexpression in E.coli. Stable subcomplexes with both A plus T components can also be isolated. This complex interacts with at least 2 substrate-specific components, BioY and RibU.

It is found in the cell inner membrane. Functionally, ATP-binding (A) component of a common energy-coupling factor (ECF) ABC-transporter complex. Unlike classic ABC transporters this ECF transporter provides the energy necessary to transport a number of different substrates. Expression of the complex plus RibU in E.coli allows riboflavin uptake; uptake does not occur in the absence of RibU or the EcfA1A2T complex. This is Energy-coupling factor transporter ATP-binding protein EcfA2 (ecfA2) from Thermotoga maritima (strain ATCC 43589 / DSM 3109 / JCM 10099 / NBRC 100826 / MSB8).